The sequence spans 242 residues: tRNA pseudouridine synthase A (242 aa).

D51 functions as the Nucleophile in the catalytic mechanism. Y107 contacts substrate.

This sequence belongs to the tRNA pseudouridine synthase TruA family. Homodimer.

It carries out the reaction uridine(38/39/40) in tRNA = pseudouridine(38/39/40) in tRNA. Functionally, formation of pseudouridine at positions 38, 39 and 40 in the anticodon stem and loop of transfer RNAs. The sequence is that of tRNA pseudouridine synthase A from Helicobacter pylori (strain G27).